A 308-amino-acid polypeptide reads, in one-letter code: Polyketide transferase claH (308 aa).

Residues 50–280 (SDIAVYFSQQ…RVEVAAGKSH (231 aa)) form an abhydrolase domain region.

The protein belongs to the polyketide transferase af380 family.

It participates in secondary metabolite biosynthesis. Functionally, polyketide transferase; part of the cla gene cluster that produces clavatol and ortho-quinone methide. The clavatol biosynthesis cluster cla and the terrestric acid cluster tra are both involved in the production of peniphenones and penilactones. The non-reducing PKS claF is responsible for the formation of clavatol from successive condensations of 3 malonyl-CoA units, presumably with a simple acetyl-CoA starter unit, and 2 methylation steps. The esterase claE probably collaborates with claF by catalyzing the hydrolysis of ACP-bound acyl intermediates to free the ACP from stalled intermediates. The clavatol oxidase claD then converts clavatol to hydroxyclavatol. Spontaneous dehydration of hydroxyclavatol leads to the accumulation of the highly active ortho-quinone methide. On the other hand, the PKS-NRPS hybrid traA is involved in the formation of crustosic acid, with the help of traB and traD. The polyketide synthase module (PKS) of traA is responsible for the synthesis of the polyketide backbone via the condensation of an acetyl-CoA starter unit with 3 malonyl-CoA units. The downstream nonribosomal peptide synthetase (NRPS) module then amidates the carboxyl end of the polyketide with L-malic acid. Because traA lacks a designated enoylreductase (ER) domain, the required activity is provided the enoyl reductase traG. Crustosic acid undergoes decarboxylation and isomerization to the terrestric acid, catalyzed by the 2-oxoglutarate-dependent dioxygenase traH. Both acids are further converted to the 2 gamma-butyrolactones (R)-5-methyltetronic acid and (S)-5-carboxylmethyltetronic acid, with involvement of the cytochrome P450 monooxygenase claJ. Spontaneous addition of the methide to these gamma-butyrolactones leads to peniphenone D and penilactone D, which undergo again stereospecific attacking by methide to give penilactones A and B. The function of the polyketide transferase claH has not been investigated yet. The polypeptide is Polyketide transferase claH (Penicillium crustosum (Blue mold fungus)).